The sequence spans 177 residues: Alpha-crystallin B chain (177 aa).

M1 bears the N-acetylmethionine mark. In terms of domain architecture, sHSP spans 58-166 (RMPSWAQTGL…PERSVPISRD (109 aa)). Zn(2+)-binding residues include H85, H106, E108, H113, and H121. Residues 155-169 (DVPERSVPISRDEKP) show a composition bias toward basic and acidic residues. The interval 155-177 (DVPERSVPISRDEKPAVAGPQQK) is disordered.

Belongs to the small heat shock protein (HSP20) family. As to quaternary structure, heteromer composed of three CRYAA and one CRYAB subunits. Aggregates with homologous proteins, including the small heat shock protein HSPB1, to form large heteromeric complexes. Inter-subunit bridging via zinc ions enhances stability, which is crucial as there is no protein turn over in the lens. Interacts with HSPBAP1 and TTN/titin.

Its function is as follows. May contribute to the transparency and refractive index of the lens. This chain is Alpha-crystallin B chain (CRYAB), found in Squalus acanthias (Spiny dogfish).